A 63-amino-acid polypeptide reads, in one-letter code: Small ribosomal subunit protein eS17 (63 aa).

This sequence belongs to the eukaryotic ribosomal protein eS17 family.

This Methanococcus aeolicus (strain ATCC BAA-1280 / DSM 17508 / OCM 812 / Nankai-3) protein is Small ribosomal subunit protein eS17.